Consider the following 384-residue polypeptide: D-galactosamine-6-phosphate deaminase AgaS (384 aa).

2 consecutive SIS domains span residues 45–197 (LEPL…SQTF) and 215–364 (SEGV…PDTP).

Belongs to the SIS family. AgaS subfamily.

The enzyme catalyses D-galactosamine 6-phosphate + H2O = D-tagatopyranose 1-phosphate + NH4(+). Its function is as follows. Catalyzes the isomerization-deamination of galactosamine 6-phosphate to form tagatofuranose 6-phosphate and ammonium ion. The chain is D-galactosamine-6-phosphate deaminase AgaS from Escherichia coli O157:H7.